Consider the following 938-residue polypeptide: Protein translocase subunit SecA (938 aa).

ATP is bound by residues Q90, 108 to 112 (GEGKT), and D504.

This sequence belongs to the SecA family. In terms of assembly, monomer and homodimer. Part of the essential Sec protein translocation apparatus which comprises SecA, SecYEG and auxiliary proteins SecDF. Other proteins may also be involved.

The protein resides in the cell inner membrane. Its subcellular location is the cellular thylakoid membrane. It is found in the cytoplasm. It carries out the reaction ATP + H2O + cellular proteinSide 1 = ADP + phosphate + cellular proteinSide 2.. Functionally, part of the Sec protein translocase complex. Interacts with the SecYEG preprotein conducting channel. Has a central role in coupling the hydrolysis of ATP to the transfer of proteins into and across the cell membrane, serving as an ATP-driven molecular motor driving the stepwise translocation of polypeptide chains across the membrane. Probably participates in protein translocation into and across both the cytoplasmic and thylakoid membranes in cyanobacterial cells. This Picosynechococcus sp. (strain ATCC 27264 / PCC 7002 / PR-6) (Agmenellum quadruplicatum) protein is Protein translocase subunit SecA.